The primary structure comprises 559 residues: Oxygen-dependent choline dehydrogenase (559 aa).

4–33 is a binding site for FAD; the sequence is DYIIIGAGSAGNVLATRLTEDSDVTVLLLE. The active-site Proton acceptor is the His-473.

Belongs to the GMC oxidoreductase family. It depends on FAD as a cofactor.

It catalyses the reaction choline + A = betaine aldehyde + AH2. It carries out the reaction betaine aldehyde + NAD(+) + H2O = glycine betaine + NADH + 2 H(+). The protein operates within amine and polyamine biosynthesis; betaine biosynthesis via choline pathway; betaine aldehyde from choline (cytochrome c reductase route): step 1/1. Its function is as follows. Involved in the biosynthesis of the osmoprotectant glycine betaine. Catalyzes the oxidation of choline to betaine aldehyde and betaine aldehyde to glycine betaine at the same rate. The chain is Oxygen-dependent choline dehydrogenase from Cronobacter sakazakii (strain ATCC BAA-894) (Enterobacter sakazakii).